The sequence spans 357 residues: Cobalt-precorrin-5B C(1)-methyltransferase (357 aa).

This sequence belongs to the CbiD family.

It catalyses the reaction Co-precorrin-5B + S-adenosyl-L-methionine = Co-precorrin-6A + S-adenosyl-L-homocysteine. The protein operates within cofactor biosynthesis; adenosylcobalamin biosynthesis; cob(II)yrinate a,c-diamide from sirohydrochlorin (anaerobic route): step 6/10. Catalyzes the methylation of C-1 in cobalt-precorrin-5B to form cobalt-precorrin-6A. This chain is Cobalt-precorrin-5B C(1)-methyltransferase, found in Paramagnetospirillum magneticum (strain ATCC 700264 / AMB-1) (Magnetospirillum magneticum).